The sequence spans 310 residues: Protoheme IX farnesyltransferase 2 (310 aa).

9 helical membrane passes run 25 to 45 (PGII…AAKG), 49 to 69 (LVLM…GCAI), 87 to 107 (RVTV…LALG), 120 to 139 (ALAL…VYSL), 145 to 165 (SVYG…VGYC), 176 to 196 (AILL…IAIF), 220 to 240 (LHIV…PLAG), 242 to 262 (TGIA…AMAL), and 277 to 297 (QVFG…ALDF).

The protein belongs to the UbiA prenyltransferase family. Protoheme IX farnesyltransferase subfamily.

The protein resides in the cell inner membrane. The enzyme catalyses heme b + (2E,6E)-farnesyl diphosphate + H2O = Fe(II)-heme o + diphosphate. It participates in porphyrin-containing compound metabolism; heme O biosynthesis; heme O from protoheme: step 1/1. Converts heme B (protoheme IX) to heme O by substitution of the vinyl group on carbon 2 of heme B porphyrin ring with a hydroxyethyl farnesyl side group. The sequence is that of Protoheme IX farnesyltransferase 2 from Shewanella baltica (strain OS185).